The following is a 273-amino-acid chain: 2,3,4,5-tetrahydropyridine-2,6-dicarboxylate N-succinyltransferase (273 aa).

2 residues coordinate substrate: R104 and D141.

Belongs to the transferase hexapeptide repeat family. In terms of assembly, homotrimer.

It is found in the cytoplasm. It carries out the reaction (S)-2,3,4,5-tetrahydrodipicolinate + succinyl-CoA + H2O = (S)-2-succinylamino-6-oxoheptanedioate + CoA. It participates in amino-acid biosynthesis; L-lysine biosynthesis via DAP pathway; LL-2,6-diaminopimelate from (S)-tetrahydrodipicolinate (succinylase route): step 1/3. The protein is 2,3,4,5-tetrahydropyridine-2,6-dicarboxylate N-succinyltransferase of Neisseria meningitidis serogroup C (strain 053442).